The chain runs to 276 residues: Diaminopimelate epimerase (276 aa).

Substrate-binding residues include Asn13, Gln46, and Asn66. Cys75 (proton donor) is an active-site residue. Residues 76–77 (GN), Asn159, Asn192, and 210–211 (ER) each bind substrate. Cys219 functions as the Proton acceptor in the catalytic mechanism. Residue 220-221 (GT) participates in substrate binding.

The protein belongs to the diaminopimelate epimerase family. As to quaternary structure, homodimer.

It is found in the cytoplasm. The enzyme catalyses (2S,6S)-2,6-diaminopimelate = meso-2,6-diaminopimelate. The protein operates within amino-acid biosynthesis; L-lysine biosynthesis via DAP pathway; DL-2,6-diaminopimelate from LL-2,6-diaminopimelate: step 1/1. Functionally, catalyzes the stereoinversion of LL-2,6-diaminopimelate (L,L-DAP) to meso-diaminopimelate (meso-DAP), a precursor of L-lysine and an essential component of the bacterial peptidoglycan. The sequence is that of Diaminopimelate epimerase from Pseudomonas syringae pv. syringae (strain B728a).